The chain runs to 134 residues: 6,7-dimethyl-8-ribityllumazine synthase (134 aa).

5-amino-6-(D-ribitylamino)uracil-binding positions include F11, 43-45 (AYD), and 67-69 (AIV). (2S)-2-hydroxy-3-oxobutyl phosphate is bound at residue 72–73 (DT). The active-site Proton donor is H75. Residue F100 participates in 5-amino-6-(D-ribitylamino)uracil binding. Position 115 (R115) interacts with (2S)-2-hydroxy-3-oxobutyl phosphate.

This sequence belongs to the DMRL synthase family.

The enzyme catalyses (2S)-2-hydroxy-3-oxobutyl phosphate + 5-amino-6-(D-ribitylamino)uracil = 6,7-dimethyl-8-(1-D-ribityl)lumazine + phosphate + 2 H2O + H(+). The protein operates within cofactor biosynthesis; riboflavin biosynthesis; riboflavin from 2-hydroxy-3-oxobutyl phosphate and 5-amino-6-(D-ribitylamino)uracil: step 1/2. In terms of biological role, catalyzes the formation of 6,7-dimethyl-8-ribityllumazine by condensation of 5-amino-6-(D-ribitylamino)uracil with 3,4-dihydroxy-2-butanone 4-phosphate. This is the penultimate step in the biosynthesis of riboflavin. The polypeptide is 6,7-dimethyl-8-ribityllumazine synthase (Halorubrum lacusprofundi (strain ATCC 49239 / DSM 5036 / JCM 8891 / ACAM 34)).